The sequence spans 247 residues: Fasciclin-like arabinogalactan protein 6 (247 aa).

The N-terminal stretch at 1–23 (MSSSLFSYVVLLIFLFTIPYIQS) is a signal peptide. Positions 36 to 182 (PINLTAILEA…LAVYVVDSVL (147 aa)) constitute an FAS1 domain. N-linked (GlcNAc...) asparagine glycans are attached at residues asparagine 38, asparagine 57, asparagine 70, asparagine 142, and asparagine 153. A compositionally biased stretch (low complexity) spans 192 to 212 (TTPTGAPAPKSSTSSSDADSP). The disordered stretch occupies residues 192-221 (TTPTGAPAPKSSTSSSDADSPAADDEHKSA). Glycine 222 carries GPI-anchor amidated glycine lipidation. A propeptide spans 223-247 (SSVKRTSLGIVVSFALFCCSVIYIA) (removed in mature form).

It belongs to the fasciclin-like AGP family.

It is found in the cell membrane. In terms of biological role, may be a cell surface adhesion protein. This chain is Fasciclin-like arabinogalactan protein 6 (FLA6), found in Arabidopsis thaliana (Mouse-ear cress).